The sequence spans 498 residues: Nucleobase transporter PlAzg2 (498 aa).

The next 13 helical transmembrane spans lie at 88–108, 118–138, 142–162, 169–189, 203–223, 236–256, 259–279, 312–332, 357–377, 388–408, 412–432, 443–463, and 478–498; these read LLAG…NSSI, AGII…GLWG, LVIV…VQGM, ALAA…TSLV, AISV…GGVI, FADP…ILYI, VPGN…LFKA, TLVI…VGLI, ILSG…AAGI, IATG…TLVP, VAPI…HISF, FIIA…IGFI, and VKPL…LQTM.

It belongs to the nucleobase:cation symporter-2 (NCS2) (TC 2.A.40) family. Azg-like subfamily.

It is found in the cell membrane. Its activity is regulated as follows. Inhibited by the proton gradient disruptor carbonyl cyanide m-chlorophenylhydrazone (CCCP), but not by the sodium gradient disruptor ouabain. Transports adenine, guanine, hypoxanthine, xanthine, cytosine and uracil. Transport is probably proton-dependent. This is Nucleobase transporter PlAzg2 from Paenibacillus larvae subsp. larvae (strain NRRL B-3650 / LMG 16245).